The chain runs to 708 residues: MANNDKQLMFTRNIGIMAHIDAGKTTTSERILFYTGLTHKIGETHDGTATMDWMAQEQERGITITSAATTTFWNYLGNRYKINLIDTPGHVDFTVEVERSLRVLDGAVATFCAVGGVEPQSETVWRQADKYNVPRIGYVNKMDRSGANYYEVVRQLKDVLGANPCPIQIPIGAEETFKGVVDLIKMKAIFWHDETMGAEYSVEEIPADLQAEAEEWRDKMLEALAECDDAIMEKYFDDPSTITEEEIMVAIRKGTLAMQINPMTCGSSFKNKGVQTLLDAVCAFLPSPEDTPAIEGTDPSDPDKIITRKPLFEEPLTALAFKIATDPYVGRLCFFRVYAGSINAGSYVLNTRSGKKERISRLFQMHSNKQNPMEVIGCGDIGAGVGFKDIRTGDTLCDENHPITLESMEFPEPVIGIAVEPKTQKDMDKLGMGLAKLAEEDPTFRVQTNEETGQTVISGMGELHLDIIIDRLRREFKVECNQGRPQVTYKEAITQPVELREVYKKQSGGRGKFADIIVRMEPADESFEGTLQFIDEVKGGNIPKEFIPSVQKGFEKAMKNGVLAGYPLDKLKVTLIDGSFHPVDSDQLSFEIAAIQAFKNASAKAGPVLMEPIMQMEVVTPEESMGDVIGDLNKRRGQVEGMETSRTGARIVKAKVPLAETFGYVTALRTITSGRATSSMQFSHYAQVSSSIAKQVLTEVQGRVDLIK.

A tr-type G domain is found at 9–289 (MFTRNIGIMA…AVCAFLPSPE (281 aa)). Residues 18-25 (AHIDAGKT), 86-90 (DTPGH), and 140-143 (NKMD) contribute to the GTP site.

This sequence belongs to the TRAFAC class translation factor GTPase superfamily. Classic translation factor GTPase family. EF-G/EF-2 subfamily.

The protein localises to the cytoplasm. Functionally, catalyzes the GTP-dependent ribosomal translocation step during translation elongation. During this step, the ribosome changes from the pre-translocational (PRE) to the post-translocational (POST) state as the newly formed A-site-bound peptidyl-tRNA and P-site-bound deacylated tRNA move to the P and E sites, respectively. Catalyzes the coordinated movement of the two tRNA molecules, the mRNA and conformational changes in the ribosome. This Parabacteroides distasonis (strain ATCC 8503 / DSM 20701 / CIP 104284 / JCM 5825 / NCTC 11152) protein is Elongation factor G.